Here is a 752-residue protein sequence, read N- to C-terminus: Zinc finger protein 184 (752 aa).

One can recognise a KRAB domain in the interval 28–99 (VTFKDVIVDF…EPSIPVGTPG (72 aa)). A phosphoserine mark is found at serine 117, serine 122, and serine 200. Residue lysine 207 forms a Glycyl lysine isopeptide (Lys-Gly) (interchain with G-Cter in SUMO2) linkage. 19 C2H2-type zinc fingers span residues 223–245 (CKCNECGKAFTYCSALIRHQRTH), 251–273 (YKCNECEKAFSRSENLINHQRIH), 279–301 (YKCDQCGKGFIEGPSLTQHQRIH), 307–329 (YKCDECGKAFSQRTHLVQHQRIH), 335–357 (YTCNECGKAFSQRGHFMEHQKIH), 363–385 (FKCDECDKTFTRSTHLTQHQKIH), 391–413 (YKCNECGKAFNGPSTFIRHHMIH), 419–441 (YECNECGKAFSQHSNLTQHQKTH), 447–469 (YDCAECGKSFSYWSSLAQHLKIH), 475–497 (YKCNECGKAFSYCSSLTQHRRIH), 503–525 (FECSECGKAFSYLSNLNQHQKTH), 531–553 (YECKECGKAFIRSSSLAKHERIH), 559–581 (YQCHECGKTFSYGSSLIQHRKIH), 587–609 (YKCNECGRAFNQNIHLTQHKRIH), 615–637 (YECAECGKAFRHCSSLAQHQKTH), 643–665 (YHCNKCEKAFSQSSHLAQHQRIH), 671–693 (YKCNECDKTFSRSTHLTEHQNTH), 699–721 (YNCNECRKTFSQSTYLIQHQRIH), and 727–749 (FGCNDCGKAFRYRSALNKHQRLH).

The protein belongs to the krueppel C2H2-type zinc-finger protein family.

It localises to the nucleus. May be involved in transcriptional regulation. The polypeptide is Zinc finger protein 184 (ZNF184) (Bos taurus (Bovine)).